Consider the following 357-residue polypeptide: Probable cinnamyl alcohol dehydrogenase (357 aa).

Cys47 is a binding site for Zn(2+). Residue Thr49 participates in NADP(+) binding. Zn(2+) is bound by residues His69, Glu70, Cys100, Cys103, Cys106, Cys114, and Cys163. NADP(+) is bound by residues Thr167, 188 to 193 (GLGGVG), 211 to 216 (SSSDKK), Thr251, Gly275, and 298 to 300 (SFI).

The protein belongs to the zinc-containing alcohol dehydrogenase family. As to quaternary structure, homodimer. Requires Zn(2+) as cofactor.

The catalysed reaction is (E)-cinnamyl alcohol + NADP(+) = (E)-cinnamaldehyde + NADPH + H(+). The enzyme catalyses (E)-coniferol + NADP(+) = (E)-coniferaldehyde + NADPH + H(+). It catalyses the reaction (E)-sinapyl alcohol + NADP(+) = (E)-sinapaldehyde + NADPH + H(+). It carries out the reaction (E)-4-coumaroyl alcohol + NADP(+) = (E)-4-coumaraldehyde + NADPH + H(+). The catalysed reaction is (E)-caffeyl alcohol + NADP(+) = (E)-caffeyl aldehyde + NADPH + H(+). Its pathway is aromatic compound metabolism; phenylpropanoid biosynthesis. Involved in lignin biosynthesis. Catalyzes the final step specific for the production of lignin monomers. Catalyzes the NADPH-dependent reduction of coniferaldehyde, 5-hydroxyconiferaldehyde, sinapaldehyde, 4-coumaraldehyde and caffeyl aldehyde to their respective alcohols. The polypeptide is Probable cinnamyl alcohol dehydrogenase (Populus deltoides (Eastern poplar)).